The chain runs to 1173 residues: Eukaryotic translation initiation factor 3 subunit A (1173 aa).

Residues 319–502 (LQRMAAHVLL…NSIYFGTDLT (184 aa)) form the PCI domain. 2 disordered regions span residues 589 to 613 (QNNA…LAEQ) and 836 to 1173 (AAEA…PVQL). 4 stretches are compositionally biased toward basic and acidic residues: residues 836–900 (AAEA…RGGD), 925–1011 (DRNE…EPDS), 1028–1081 (SRDD…DAAP), and 1090–1125 (DAPR…RAPK). The segment covering 1128–1142 (GPSGGTGTAAGGGGN) has biased composition (gly residues). Positions 1149-1165 (PRDEPAPKRDQPQDKGK) are enriched in basic and acidic residues.

Belongs to the eIF-3 subunit A family. In terms of assembly, component of the eukaryotic translation initiation factor 3 (eIF-3) complex. The eIF-3 complex interacts with pix.

The protein resides in the cytoplasm. RNA-binding component of the eukaryotic translation initiation factor 3 (eIF-3) complex, which is involved in protein synthesis of a specialized repertoire of mRNAs and, together with other initiation factors, stimulates binding of mRNA and methionyl-tRNAi to the 40S ribosome. The eIF-3 complex specifically targets and initiates translation of a subset of mRNAs involved in cell proliferation. In Drosophila persimilis (Fruit fly), this protein is Eukaryotic translation initiation factor 3 subunit A.